An 847-amino-acid polypeptide reads, in one-letter code: Leucine--tRNA ligase (847 aa).

The 'HIGH' region signature appears at 41 to 51; the sequence is PYPSGRIHMGH. The 'KMSKS' region signature appears at 619-623; that stretch reads KMSKS. K622 contacts ATP.

Belongs to the class-I aminoacyl-tRNA synthetase family.

It localises to the cytoplasm. The catalysed reaction is tRNA(Leu) + L-leucine + ATP = L-leucyl-tRNA(Leu) + AMP + diphosphate. This is Leucine--tRNA ligase from Cereibacter sphaeroides (strain ATCC 17023 / DSM 158 / JCM 6121 / CCUG 31486 / LMG 2827 / NBRC 12203 / NCIMB 8253 / ATH 2.4.1.) (Rhodobacter sphaeroides).